The chain runs to 882 residues: Translation initiation factor IF-2 (882 aa).

Polar residues-rich tracts occupy residues 38-56 (NDSN…AEYS), 97-124 (GGYS…YSQN), and 140-192 (GGYS…NRDS). Disordered regions lie at residues 38–192 (NDSN…NRDS) and 236–274 (STPA…AETE). A compositionally biased stretch (basic and acidic residues) spans 243-259 (ENSKELNRKLGEKKKQQ). A tr-type G domain is found at 380–553 (EKPPVITIMG…DMMLLKANPS (174 aa)). Positions 389 to 396 (GHVDHGKT) are G1. Position 389 to 396 (389 to 396 (GHVDHGKT)) interacts with GTP. Residues 414-418 (GITQH) are G2. Positions 435–438 (DTPG) are G3. Residues 435 to 439 (DTPGH) and 489 to 492 (NKID) contribute to the GTP site. Residues 489-492 (NKID) are G4. The segment at 525-527 (SAL) is G5.

It belongs to the TRAFAC class translation factor GTPase superfamily. Classic translation factor GTPase family. IF-2 subfamily.

Its subcellular location is the cytoplasm. Functionally, one of the essential components for the initiation of protein synthesis. Protects formylmethionyl-tRNA from spontaneous hydrolysis and promotes its binding to the 30S ribosomal subunits. Also involved in the hydrolysis of GTP during the formation of the 70S ribosomal complex. This chain is Translation initiation factor IF-2 (infB), found in Borreliella burgdorferi (strain ATCC 35210 / DSM 4680 / CIP 102532 / B31) (Borrelia burgdorferi).